Here is a 412-residue protein sequence, read N- to C-terminus: Cytochrome P450-SOY (412 aa).

A compositionally biased stretch (polar residues) spans 1 to 25 (MTESTTDPARQNLDPTSPAPATSFP). The tract at residues 1-38 (MTESTTDPARQNLDPTSPAPATSFPQDRGCPYHPPAGY) is disordered. Cysteine 361 contributes to the heme binding site.

This sequence belongs to the cytochrome P450 family. Heme is required as a cofactor.

It is found in the cytoplasm. The polypeptide is Cytochrome P450-SOY (cyp105D1) (Streptomyces griseus).